A 123-amino-acid chain; its full sequence is MYSSGIDIVDVLRIKKLHERFGERFLHKIYTKGELEYAFSTKEPYLRLAARFAAKEAAAKALGTGIGKVNFKDIEVVLGTDGPELIFHGYAAKIFQEKGFTGKSLSLSHEKKVAVAICVMWRD.

The Mg(2+) site is built by Asp7 and Glu56.

This sequence belongs to the P-Pant transferase superfamily. AcpS family. Requires Mg(2+) as cofactor.

It is found in the cytoplasm. The catalysed reaction is apo-[ACP] + CoA = holo-[ACP] + adenosine 3',5'-bisphosphate + H(+). Its function is as follows. Transfers the 4'-phosphopantetheine moiety from coenzyme A to a Ser of acyl-carrier-protein. This Carboxydothermus hydrogenoformans (strain ATCC BAA-161 / DSM 6008 / Z-2901) protein is Holo-[acyl-carrier-protein] synthase.